The sequence spans 356 residues: Chorismate synthase (356 aa).

NADP(+) contacts are provided by Arg-48 and Arg-54. FMN-binding positions include 125–127 (RSS), 237–238 (NA), Gly-281, 296–300 (KPTSS), and Arg-322.

The protein belongs to the chorismate synthase family. As to quaternary structure, homotetramer. It depends on FMNH2 as a cofactor.

The catalysed reaction is 5-O-(1-carboxyvinyl)-3-phosphoshikimate = chorismate + phosphate. Its pathway is metabolic intermediate biosynthesis; chorismate biosynthesis; chorismate from D-erythrose 4-phosphate and phosphoenolpyruvate: step 7/7. Catalyzes the anti-1,4-elimination of the C-3 phosphate and the C-6 proR hydrogen from 5-enolpyruvylshikimate-3-phosphate (EPSP) to yield chorismate, which is the branch point compound that serves as the starting substrate for the three terminal pathways of aromatic amino acid biosynthesis. This reaction introduces a second double bond into the aromatic ring system. The chain is Chorismate synthase from Novosphingobium aromaticivorans (strain ATCC 700278 / DSM 12444 / CCUG 56034 / CIP 105152 / NBRC 16084 / F199).